The chain runs to 511 residues: MKRRAIISVSNKKGIVTFAKQLAELGVEIISTGGTKRVLAEHGVPVISISDVTNFPEILDGRVKTLHPNIHGGLLAVRDDETHQQQLQAHNITPIDFVVVNLYPFQETIAKPNVTLMEAIEQIDIGGPTMLRAAAKNHAYVTAVVDPADYHLVIEQLKQYGEVLLETRRALAAKVFRHTAAYDAMIAQYLTNIVGETYPETMTMTFVKKQSLRYGENPHQTAAFYEKPLSSPFSIAAAKQLHGKELSYNNINDANAALQIVAEFVEPAAVAVKHMNPCGVGVGETIAEAFQKAYEADPTSIFGGIVALNREVDEQMAAKLHDIFLEIVIAPSFTEQALEILTRKKNIRLLTVDFEVERKKEPFVVSVRGGLLVQDEDTYTIDDATLRVVTERKPTEEEWSNLTFAWRVVKHVKSNAIVLAKNGMTIGVGAGQMNRVGAAKIAIEQAGDRAKGAVLASDAFFPMSDTVEAAAQAGVTAIIQPGGSIRDEDSIQKANEYGIAMVFTGVRHFKH.

The 145-residue stretch at 1–145 (MKRRAIISVS…KNHAYVTAVV (145 aa)) folds into the MGS-like domain.

The protein belongs to the PurH family.

The enzyme catalyses (6R)-10-formyltetrahydrofolate + 5-amino-1-(5-phospho-beta-D-ribosyl)imidazole-4-carboxamide = 5-formamido-1-(5-phospho-D-ribosyl)imidazole-4-carboxamide + (6S)-5,6,7,8-tetrahydrofolate. It catalyses the reaction IMP + H2O = 5-formamido-1-(5-phospho-D-ribosyl)imidazole-4-carboxamide. It functions in the pathway purine metabolism; IMP biosynthesis via de novo pathway; 5-formamido-1-(5-phospho-D-ribosyl)imidazole-4-carboxamide from 5-amino-1-(5-phospho-D-ribosyl)imidazole-4-carboxamide (10-formyl THF route): step 1/1. It participates in purine metabolism; IMP biosynthesis via de novo pathway; IMP from 5-formamido-1-(5-phospho-D-ribosyl)imidazole-4-carboxamide: step 1/1. This is Bifunctional purine biosynthesis protein PurH from Anoxybacillus flavithermus (strain DSM 21510 / WK1).